Here is a 317-residue protein sequence, read N- to C-terminus: Protoheme IX farnesyltransferase (317 aa).

The next 8 helical transmembrane spans lie at 44-64 (IGLILLTLLGGWMGAAAANTF), 93-113 (HASVFAWTLTVVSFLWLWVLC), 116-136 (VLAGLFILLTIFFYIFVYTKY), 143-163 (LNIVWGGAAGCMPVVVGWAVI), 178-198 (AIVLFMVIFFWTPPHTWALAM), 221-241 (VTRQIVWYTVATVLTTFLLIP), 243-263 (ASWIHAIIAVVSGVWFLVMAV), and 288-308 (LAVYFVGLSIDAVLGWETIGG).

Belongs to the UbiA prenyltransferase family. Protoheme IX farnesyltransferase subfamily.

It is found in the cell membrane. It carries out the reaction heme b + (2E,6E)-farnesyl diphosphate + H2O = Fe(II)-heme o + diphosphate. Its pathway is porphyrin-containing compound metabolism; heme O biosynthesis; heme O from protoheme: step 1/1. In terms of biological role, converts heme B (protoheme IX) to heme O by substitution of the vinyl group on carbon 2 of heme B porphyrin ring with a hydroxyethyl farnesyl side group. The sequence is that of Protoheme IX farnesyltransferase from Corynebacterium diphtheriae (strain ATCC 700971 / NCTC 13129 / Biotype gravis).